A 483-amino-acid chain; its full sequence is Altronate oxidoreductase (483 aa).

18-29 (IIQFGEGNFLRA) is an NAD(+) binding site.

Belongs to the mannitol dehydrogenase family. UxaB subfamily.

The catalysed reaction is D-altronate + NAD(+) = keto-D-tagaturonate + NADH + H(+). Its pathway is carbohydrate metabolism; pentose and glucuronate interconversion. The sequence is that of Altronate oxidoreductase from Escherichia coli O6:K15:H31 (strain 536 / UPEC).